The chain runs to 261 residues: Glutamate racemase (261 aa).

Residues 12 to 13 (DS) and 44 to 45 (YG) each bind substrate. Cys76 serves as the catalytic Proton donor/acceptor. 77–78 (NT) is a binding site for substrate. Cys180 functions as the Proton donor/acceptor in the catalytic mechanism. Substrate is bound at residue 181–182 (TH).

It belongs to the aspartate/glutamate racemases family.

The catalysed reaction is L-glutamate = D-glutamate. It functions in the pathway cell wall biogenesis; peptidoglycan biosynthesis. Its function is as follows. Provides the (R)-glutamate required for cell wall biosynthesis. The sequence is that of Glutamate racemase from Borreliella burgdorferi (strain ATCC 35210 / DSM 4680 / CIP 102532 / B31) (Borrelia burgdorferi).